The primary structure comprises 347 residues: GMP reductase (347 aa).

108–131 contacts NADP(+); sequence ADFEKTVQILALNPALNFVCIDVA. Residues Gly181 and Gly183 each contribute to the K(+) site. Cys186 functions as the Thioimidate intermediate in the catalytic mechanism. NADP(+) is bound at residue 216–239; the sequence is IVSDGGCTMPGDVAKAFGGGADFV.

It belongs to the IMPDH/GMPR family. GuaC type 1 subfamily. Homotetramer.

The catalysed reaction is IMP + NH4(+) + NADP(+) = GMP + NADPH + 2 H(+). Its function is as follows. Catalyzes the irreversible NADPH-dependent deamination of GMP to IMP. It functions in the conversion of nucleobase, nucleoside and nucleotide derivatives of G to A nucleotides, and in maintaining the intracellular balance of A and G nucleotides. The polypeptide is GMP reductase (Salmonella choleraesuis (strain SC-B67)).